The chain runs to 117 residues: Large ribosomal subunit protein bL17 (117 aa).

The protein belongs to the bacterial ribosomal protein bL17 family. In terms of assembly, part of the 50S ribosomal subunit. Contacts protein L32.

The polypeptide is Large ribosomal subunit protein bL17 (Campylobacter jejuni subsp. jejuni serotype O:6 (strain 81116 / NCTC 11828)).